We begin with the raw amino-acid sequence, 153 residues long: SsrA-binding protein (153 aa).

The protein belongs to the SmpB family.

The protein localises to the cytoplasm. In terms of biological role, required for rescue of stalled ribosomes mediated by trans-translation. Binds to transfer-messenger RNA (tmRNA), required for stable association of tmRNA with ribosomes. tmRNA and SmpB together mimic tRNA shape, replacing the anticodon stem-loop with SmpB. tmRNA is encoded by the ssrA gene; the 2 termini fold to resemble tRNA(Ala) and it encodes a 'tag peptide', a short internal open reading frame. During trans-translation Ala-aminoacylated tmRNA acts like a tRNA, entering the A-site of stalled ribosomes, displacing the stalled mRNA. The ribosome then switches to translate the ORF on the tmRNA; the nascent peptide is terminated with the 'tag peptide' encoded by the tmRNA and targeted for degradation. The ribosome is freed to recommence translation, which seems to be the essential function of trans-translation. This chain is SsrA-binding protein, found in Macrococcus caseolyticus (strain JCSC5402) (Macrococcoides caseolyticum).